Here is a 322-residue protein sequence, read N- to C-terminus: Uridylate-specific endoribonuclease EndoU (322 aa).

Residues 25-45 traverse the membrane as a helical segment; sequence FVIVGLLITIGILSWHFYEYF. One can recognise an EndoU domain in the interval 53-322; it reads TPDDVLTLSK…LIGTVYPDSS (270 aa). Residues histidine 200, histidine 215, and lysine 259 contribute to the active site.

The protein belongs to the ENDOU family. In terms of assembly, monomer. Mn(2+) serves as cofactor. Predominantly expressed in head.

It localises to the membrane. The enzyme catalyses a ribonucleotidyl-ribonucleotide-RNA = a 3'-end 2',3'-cyclophospho-ribonucleotide-RNA + a 5'-end dephospho-ribonucleoside-RNA. In terms of biological role, endoribonuclease that cleaves single-stranded RNAs at uridylates and releases products that have 2'-3'-cyclic phosphate termini. Preferentially cleaves single stranded RNA at poly-U sites with CU, UC and AU sites cleaved less efficiently. May target mRNAs encoding proteins involved in lipid metabolism to regulate their expression. Regulates levels of TBPH protein, but not mRNA, by an as yet unknown mechanism. Important for neuronal development or function. This chain is Uridylate-specific endoribonuclease EndoU, found in Drosophila melanogaster (Fruit fly).